We begin with the raw amino-acid sequence, 91 residues long: Alpha-latrotoxin associated low molecular weight protein SGV150-311 (91 aa).

A signal peptide spans 1-18 (MNVLHFLILLMSVVSVFC).

It belongs to the arthropod CHH/MIH/GIH/VIH hormone family. As to expression, expressed by the venom gland.

It is found in the secreted. Its function is as follows. May increase the toxicity of alpha-latrotoxin and/or other venom components. Is non-toxic to mice and to the cockroach Periplaneta americana. The polypeptide is Alpha-latrotoxin associated low molecular weight protein SGV150-311 (Steatoda grossa (False black widow)).